We begin with the raw amino-acid sequence, 457 residues long: Probable mitochondrial-processing peptidase subunit beta (457 aa).

Histidine 66 is a Zn(2+) binding site. Glutamate 69 serves as the catalytic Proton acceptor. The Zn(2+) site is built by histidine 70 and glutamate 146.

The protein belongs to the peptidase M16 family. As to quaternary structure, heterodimer of mas2 (alpha) and qcr1 (beta) subunits, forming the mitochondrial processing protease (MPP) in which mas2 is involved in substrate recognition and binding and qcr1 is the catalytic subunit. Requires Zn(2+) as cofactor.

The protein localises to the mitochondrion matrix. The enzyme catalyses Release of N-terminal transit peptides from precursor proteins imported into the mitochondrion, typically with Arg in position P2.. Binding to mas2 is required for catalytic activity. In terms of biological role, catalytic subunit of the essential mitochondrial processing protease (MPP), which cleaves the mitochondrial sequence off newly imported precursors proteins. Preferentially, cleaves after an arginine at position P2. The chain is Probable mitochondrial-processing peptidase subunit beta (qcr1) from Schizosaccharomyces pombe (strain 972 / ATCC 24843) (Fission yeast).